A 625-amino-acid chain; its full sequence is Protein LEO1 homolog (625 aa).

Disordered regions lie at residues methionine 1–leucine 214 and glutamate 415–aspartate 625. Acidic residues-rich tracts occupy residues aspartate 40–glutamate 55 and glutamate 63–serine 80. Composition is skewed to basic and acidic residues over residues serine 97–glycine 113, glutamine 121–glutamate 137, and glutamate 182–isoleucine 197. A Phosphoserine modification is found at serine 203. Basic and acidic residues predominate over residues glutamate 415–glutamate 425. A coiled-coil region spans residues glutamate 415 to serine 539. The segment covering serine 426–serine 436 has biased composition (polar residues). Over residues tyrosine 471–isoleucine 491 the composition is skewed to basic and acidic residues. Over residues leucine 492 to isoleucine 501 the composition is skewed to basic residues. Over residues glutamate 523 to glutamate 537 the composition is skewed to acidic residues. Residues lysine 538–aspartate 547 are compositionally biased toward basic and acidic residues. A phosphoserine mark is found at serine 548, serine 570, serine 600, serine 605, and serine 622. Residues serine 548–glutamate 561 show a composition bias toward acidic residues.

Belongs to the LEO1 family. In terms of assembly, component of the nuclear PAF1 complex (PAF1C), which consists of VIP2/ELF7/PAF1, VIP3/SKI8/WDR61, VIP4/LEO1, VIP5/RTF1, VIP6/ELF8/CTR9 and CDC73. Interacts with VIP3 and VIP6. Expressed in roots, shoot apices, stems, cauline leaves, inflorescence apices and flowers.

It is found in the nucleus. Functionally, component of the PAF1 complex (PAF1C) which is involved in histone modifications such as methylation on histone H3 'Lys-4' (H3K4me3). Involved in regulation of flowering time. Required for the expression of the flowering repressor and MADS box gene FLC. Involved in the control of seed dormancy and germination. The chain is Protein LEO1 homolog from Arabidopsis thaliana (Mouse-ear cress).